Consider the following 771-residue polypeptide: Rho GTPase-activating protein 26 (771 aa).

The BAR domain maps to Glu-7–Ala-262. The PH domain occupies Pro-265–Pro-369. Residues Ala-383–Phe-568 form the Rho-GAP domain. A disordered region spans residues Pro-575–Val-712. Residues His-608 to Asn-617 are compositionally biased toward basic and acidic residues. The segment covering Ser-618–Ser-637 has biased composition (low complexity). 2 stretches are compositionally biased toward polar residues: residues Thr-638–Ala-650 and Arg-662–Asn-671. Composition is skewed to low complexity over residues Ser-673–Ser-683 and Pro-691–Val-712. The region spanning Ser-713–Leu-771 is the SH3 domain.

It is found in the cell junction. It localises to the focal adhesion. Its subcellular location is the cytoplasm. The protein resides in the cytoskeleton. The protein localises to the endosome membrane. Its function is as follows. GTPase-activating protein for rhoa and cdc42. May be involved in the regulation of neosynthesized protein export through a Rab-endososomal dependent export route. In Xenopus laevis (African clawed frog), this protein is Rho GTPase-activating protein 26 (arhgap26).